The following is a 252-amino-acid chain: Triosephosphate isomerase (252 aa).

Substrate is bound at residue 10 to 12 (NWK). Residue H96 is the Electrophile of the active site. E168 functions as the Proton acceptor in the catalytic mechanism. Substrate is bound by residues G174, S214, and 235–236 (GG).

The protein belongs to the triosephosphate isomerase family. As to quaternary structure, homodimer.

It localises to the cytoplasm. It carries out the reaction D-glyceraldehyde 3-phosphate = dihydroxyacetone phosphate. It functions in the pathway carbohydrate biosynthesis; gluconeogenesis. Its pathway is carbohydrate degradation; glycolysis; D-glyceraldehyde 3-phosphate from glycerone phosphate: step 1/1. Functionally, involved in the gluconeogenesis. Catalyzes stereospecifically the conversion of dihydroxyacetone phosphate (DHAP) to D-glyceraldehyde-3-phosphate (G3P). This is Triosephosphate isomerase from Streptococcus pyogenes serotype M2 (strain MGAS10270).